We begin with the raw amino-acid sequence, 2214 residues long: Non-reducing polyketide synthase dpmpA (2214 aa).

Residues 75–178 (EWIRTGDSHV…LAVCAGAWKD (104 aa)) form an N-terminal acylcarrier protein transacylase domain (SAT) region. The Ketosynthase family 3 (KS3) domain occupies 372-784 (DESIAIVGAS…GNNTAMIVCQ (413 aa)). Active-site for beta-ketoacyl synthase activity residues include C532, H667, and H707. The malonyl-CoA:ACP transacylase (MAT) domain stretch occupies residues 888-1184 (VFAGQTGHRP…AFLSARLGSP (297 aa)). S974 acts as the For acyl/malonyl transferase activity in catalysis. The N-terminal hotdog fold stretch occupies residues 1255 to 1389 (PQLVSVVRSS…GIIKSQEQDR (135 aa)). Positions 1255–1566 (PQLVSVVRSS…FSKVPVRSLQ (312 aa)) constitute a PKS/mFAS DH domain. Residues 1265 to 1560 (GGADPEAAEF…AILGARFSKV (296 aa)) form a product template (PT) domain region. The tract at residues 1416–1566 (GASVVQGAFV…FSKVPVRSLQ (151 aa)) is C-terminal hotdog fold. 2 Carrier domains span residues 1620-1695 (NEVK…HSRL) and 1722-1802 (KAST…SGAD). S1654 is modified (O-(pantetheine 4'-phosphoryl)serine). Positions 1698–1728 (VPQLSPHDTDRSSDLSAGQPPSTPKASTQEQ) are disordered. Over residues 1711-1726 (DLSAGQPPSTPKASTQ) the composition is skewed to polar residues. S1762 carries the post-translational modification O-(pantetheine 4'-phosphoryl)serine. Residues 1805–1827 (GFPRTSDNRRSEEGSVGHVGPEK) form a disordered region. The segment covering 1810 to 1827 (SDNRRSEEGSVGHVGPEK) has biased composition (basic and acidic residues). The interval 1958-2210 (FPAYRPDHRL…SREADLFRWI (253 aa)) is methyltransferase (CMeT) domain.

It participates in secondary metabolite biosynthesis; terpenoid biosynthesis. Its function is as follows. Non-reducing polyketide synthase; part of the gene cluster that mediates the biosynthesis of diterpenoid pyrones. The first step of the pathway is the synthesis of the alpha-pyrone moiety by the polyketide synthase dpmpA via condensation of one acetyl-CoA starter unit with 3 malonyl-CoA units and 2 methylations. The alpha-pyrone is then combined with geranylgeranyl pyrophosphate (GGPP) formed by the GGPP synthase dpmpD through the action of the prenyltransferase dpmpC to yield a linear alpha-pyrone diterpenoid. Subsequent steps in the diterpenoid pyrone biosynthetic pathway involve the decalin core formation, which is initiated by the epoxidation of the C10-C11 olefin by the FAD-dependent oxidoreductase dpmpE, and is followed by a cyclization cascade catalyzed by the terpene cyclase dpmpB. The short chain dehydrogenase/reductase dpmpG then oxidizes the 8S hydroxy group to a ketone and the short chain dehydrogenase/reductase dpmpH reduces the ketone to the 8R hydroxy group to yield higginsianin B. Higginsianin B is further methylated by the methyltransferase dpmpI to produce the intermediate named FDDP B. The cytochrome P450 monooxygenase dpmpJ then oxidizes the C-26 methyl to primary alcohol, producing the final diterpenoid pyrone with a C-26 primary alcohol on the gamma-pyrone moiety named FDDP C. This chain is Non-reducing polyketide synthase dpmpA, found in Macrophomina phaseolina (strain MS6) (Charcoal rot fungus).